The sequence spans 135 residues: Cytochrome b-c1 complex subunit 6, mitochondrial (135 aa).

Residues 1–70 are disordered; the sequence is MSFFRDLLES…ETADPLDTLR (70 aa). Acidic residues predominate over residues 19–64; sequence EPVEDVEVEQPEDAPEEEVSEETVEEEEDDDEDDDEDDEEEEETAD.

It belongs to the UQCRH/QCR6 family. Component of the ubiquinol-cytochrome c oxidoreductase (cytochrome b-c1 complex, complex III, CIII), a multisubunit enzyme composed of 10 subunits. The complex is composed of 3 respiratory subunits cytochrome b (COB), cytochrome c1 (CYT1) and Rieske protein (RIP1), 2 core protein subunits COR1 and QCR2, and 5 low-molecular weight protein subunits QCR6, QCR7, QCR8, QCR9 and QCR10. The complex exists as an obligatory dimer and forms supercomplexes (SCs) in the inner mitochondrial membrane with a monomer or a dimer of cytochrome c oxidase (complex IV, CIV), resulting in 2 different assemblies (supercomplexes III(2)IV and III(2)IV(2)).

The protein localises to the mitochondrion inner membrane. Functionally, component of the ubiquinol-cytochrome c oxidoreductase, a multisubunit transmembrane complex that is part of the mitochondrial electron transport chain which drives oxidative phosphorylation. The complex plays an important role in the uptake of multiple carbon sources present in different host niches. This is Cytochrome b-c1 complex subunit 6, mitochondrial from Candida albicans (strain SC5314 / ATCC MYA-2876) (Yeast).